Consider the following 546-residue polypeptide: Chaperonin GroEL (546 aa).

ATP is bound by residues 30–33 (TLGP), Lys51, 87–91 (DGTTT), Gly415, 479–481 (NAA), and Asp495.

The protein belongs to the chaperonin (HSP60) family. As to quaternary structure, forms a cylinder of 14 subunits composed of two heptameric rings stacked back-to-back. Interacts with the co-chaperonin GroES.

The protein localises to the cytoplasm. The catalysed reaction is ATP + H2O + a folded polypeptide = ADP + phosphate + an unfolded polypeptide.. Functionally, together with its co-chaperonin GroES, plays an essential role in assisting protein folding. The GroEL-GroES system forms a nano-cage that allows encapsulation of the non-native substrate proteins and provides a physical environment optimized to promote and accelerate protein folding. The polypeptide is Chaperonin GroEL (Xanthomonas axonopodis pv. citri (strain 306)).